Here is an 83-residue protein sequence, read N- to C-terminus: Cytochrome b559 subunit alpha (83 aa).

A helical transmembrane segment spans residues 22–36 (VIHSITIPALFIAGW). Residue H24 participates in heme binding.

Belongs to the PsbE/PsbF family. As to quaternary structure, heterodimer of an alpha subunit and a beta subunit. PSII is composed of 1 copy each of membrane proteins PsbA, PsbB, PsbC, PsbD, PsbE, PsbF, PsbH, PsbI, PsbJ, PsbK, PsbL, PsbM, PsbT, PsbX, PsbY, PsbZ, Psb30/Ycf12, peripheral proteins PsbO, CyanoQ (PsbQ), PsbU, PsbV and a large number of cofactors. It forms dimeric complexes. It depends on heme b as a cofactor.

The protein resides in the cellular thylakoid membrane. In terms of biological role, this b-type cytochrome is tightly associated with the reaction center of photosystem II (PSII). PSII is a light-driven water:plastoquinone oxidoreductase that uses light energy to abstract electrons from H(2)O, generating O(2) and a proton gradient subsequently used for ATP formation. It consists of a core antenna complex that captures photons, and an electron transfer chain that converts photonic excitation into a charge separation. The polypeptide is Cytochrome b559 subunit alpha (Synechococcus elongatus (strain ATCC 33912 / PCC 7942 / FACHB-805) (Anacystis nidulans R2)).